Reading from the N-terminus, the 946-residue chain is Ent-kaur-16-ene synthase (946 aa).

Mg(2+) is bound by residues Asp-656, Glu-660, Asn-839, Asp-840, Ser-843, and Asp-847. The DEXXE motif signature appears at 656 to 660 (DEFFE).

It belongs to the terpene synthase family. Mg(2+) is required as a cofactor.

The enzyme catalyses ent-copalyl diphosphate = ent-kaur-16-ene + diphosphate. The catalysed reaction is (2E,6E,10E)-geranylgeranyl diphosphate = ent-copalyl diphosphate. Its pathway is plant hormone biosynthesis; gibberellin biosynthesis. Functionally, catalyzes the conversion of geranylgeranyl diphosphate to the gibberellin precursor ent-kaurene diphosphate in a two step process. The polypeptide is Ent-kaur-16-ene synthase (Phaeosphaeria sp. (strain L487)).